We begin with the raw amino-acid sequence, 343 residues long: Cell division protein ZipA (343 aa).

Topologically, residues 1-4 are periplasmic; the sequence is MDLN. The chain crosses the membrane as a helical span at residues 5-25; that stretch reads TILIILGILALIGLVAHGIWS. The Cytoplasmic segment spans residues 26 to 343; sequence NRREKSQYFD…MAEAAYLARV (318 aa). The segment at 39-98 is disordered; sequence AFHRNPQSTGRPSAQASQPMTPNFAQPAKETEQIRQTYQEPQVRQMSSSPEQQTRPTAQA. Polar residues-rich tracts occupy residues 43-62 and 72-95; these read NPQSTGRPSAQASQPMTPNF and IRQTYQEPQVRQMSSSPEQQTRPT.

The protein belongs to the ZipA family. Interacts with FtsZ via their C-terminal domains.

It localises to the cell inner membrane. Essential cell division protein that stabilizes the FtsZ protofilaments by cross-linking them and that serves as a cytoplasmic membrane anchor for the Z ring. Also required for the recruitment to the septal ring of downstream cell division proteins. This is Cell division protein ZipA from Actinobacillus succinogenes (strain ATCC 55618 / DSM 22257 / CCUG 43843 / 130Z).